The sequence spans 216 residues: Ceramide-1-phosphate transfer protein (216 aa).

Residues Asp-56, Lys-60, Arg-108, Arg-112, and His-152 each coordinate an N-acylsphingoid base 1-phosphate.

This sequence belongs to the GLTP family.

It localises to the cytoplasm. The protein resides in the cytosol. The protein localises to the golgi apparatus. It is found in the trans-Golgi network membrane. Its subcellular location is the cell membrane. It localises to the endosome membrane. The protein resides in the nucleus outer membrane. The enzyme catalyses N-(hexadecanoyl)-sphing-4-enine-1-phosphate(in) = N-(hexadecanoyl)-sphing-4-enine-1-phosphate(out). The catalysed reaction is N-(9Z-octadecenoyl)-sphing-4-enine-1-phosphate(in) = N-(9Z-octadecenoyl)-sphing-4-enine-1-phosphate(out). Functionally, mediates the intracellular transfer of ceramide-1-phosphate (C1P) between organelle membranes and the cell membrane. Required for normal structure of the Golgi stacks. Can bind phosphoceramides with a variety of aliphatic chains, but has a preference for lipids with saturated C16:0 or monounsaturated C18:1 aliphatic chains, and is inefficient with phosphoceramides containing lignoceryl (C24:0). Plays a role in the regulation of the cellular levels of ceramide-1-phosphate, and thereby contributes to the regulation of phospholipase PLA2G4A activity and the release of arachidonic acid. Has no activity with galactosylceramide, lactosylceramide, sphingomyelin, phosphatidylcholine, phosphatidic acid and ceramide. C1P transfer is stimulated by phosphatidylserine in C1P source vesicles. Regulates autophagy, inflammasome mediated IL1B and IL18 processing, and pyroptosis, but not apoptosis. The sequence is that of Ceramide-1-phosphate transfer protein from Mus musculus (Mouse).